A 475-amino-acid polypeptide reads, in one-letter code: UDP-N-acetylmuramate--L-alanine ligase (475 aa).

114–120 provides a ligand contact to ATP; that stretch reads GTHGKTT.

The protein belongs to the MurCDEF family.

The protein localises to the cytoplasm. The enzyme catalyses UDP-N-acetyl-alpha-D-muramate + L-alanine + ATP = UDP-N-acetyl-alpha-D-muramoyl-L-alanine + ADP + phosphate + H(+). It functions in the pathway cell wall biogenesis; peptidoglycan biosynthesis. Functionally, cell wall formation. This is UDP-N-acetylmuramate--L-alanine ligase from Bartonella tribocorum (strain CIP 105476 / IBS 506).